A 338-amino-acid chain; its full sequence is Fructose-1,6-bisphosphatase class 1 (338 aa).

The Mg(2+) site is built by Glu94, Asp116, Leu118, and Asp119. Residues 119–122 (DGSS), Asn210, and Lys276 each bind substrate. Glu282 contributes to the Mg(2+) binding site.

It belongs to the FBPase class 1 family. As to quaternary structure, homotetramer. It depends on Mg(2+) as a cofactor.

It localises to the cytoplasm. The catalysed reaction is beta-D-fructose 1,6-bisphosphate + H2O = beta-D-fructose 6-phosphate + phosphate. It participates in carbohydrate biosynthesis; gluconeogenesis. This is Fructose-1,6-bisphosphatase class 1 from Burkholderia mallei (strain NCTC 10247).